Here is a 263-residue protein sequence, read N- to C-terminus: Lens fiber major intrinsic protein (263 aa).

Over Met-1–Phe-9 the chain is Cytoplasmic. Residues Trp-10–Gly-29 traverse the membrane as a helical segment. At Ala-30–Val-41 the chain is on the extracellular side. A helical membrane pass occupies residues Leu-42–Val-59. Over Gly-60 to His-61 the chain is Cytoplasmic. An intramembrane region (discontinuously helical) is located at residues Ile-62–Val-77. The NPA 1 signature appears at Asn-68 to Ala-70. At Gly-78–Ser-82 the chain is on the cytoplasmic side. The chain crosses the membrane as a helical span at residues Leu-83–Ser-106. Over Val-107–Val-127 the chain is Extracellular. A helical transmembrane segment spans residues Gly-128–Thr-148. At Tyr-149–Arg-156 the chain is on the cytoplasmic side. A helical membrane pass occupies residues Leu-157–Gly-175. Residues Met-176–Tyr-178 are Extracellular-facing. Residues Thr-179–Ile-193 constitute an intramembrane region (discontinuously helical). The NPA 2 signature appears at Asn-184 to Ala-186. Over Leu-194–Asn-200 the chain is Extracellular. A helical transmembrane segment spans residues His-201–Leu-222. Topologically, residues Leu-223–Leu-263 are cytoplasmic. Positions Leu-227–Leu-237 are interaction with CALM. Phosphoserine is present on Ser-235. Residues Gly-239–Leu-263 are disordered. At Ser-243 the chain carries Phosphoserine; by PKA. Phosphoserine is present on Ser-245. Deamidated asparagine is present on Asn-246.

Belongs to the MIP/aquaporin (TC 1.A.8) family. In terms of assembly, homotetramer; each monomer provides an independent water pore. Two homotetramers on opposing membranes can dimerize, forming a cell-cell junction. Interacts with CALM; the calcium-calmodulin/CALM complex interacts with the cytoplasmic domains of two aquaporins, leading to channel closure. Interacts with BFSP1 (via C-terminus); prevents calcium-dependent inhibition of the water channel activity. Fatty acylated at Met-1 and Lys-238. The acyl modifications, in decreasing order of ion abundance, are: oleoyl (C18:1) &gt; palmitoyl (C16:0) &gt; stearoyl (C18:0) &gt; eicosenoyl (C20:1) &gt; dihomo-gamma-linolenoyl (C20:3) &gt; palmitoleoyl (C16:1) &gt; eicosadienoyl (C20:2). In terms of processing, subject to partial proteolytic cleavage in the eye lens core. Partial proteolysis promotes interactions between tetramers from adjoining membranes. In terms of tissue distribution, major component of lens fiber junctions.

It localises to the cell membrane. The protein resides in the cell junction. It catalyses the reaction H2O(in) = H2O(out). The water channel activity is inhibited by calcium through calmodulin/CALM. Functionally, aquaporins form homotetrameric transmembrane channels, with each monomer independently mediating water transport across the plasma membrane along its osmotic gradient. Specifically expressed in lens fiber cells, this aquaporin is crucial for maintaining lens water homeostasis and transparency. Beyond water permeability, it also acts as a cell-to-cell adhesion molecule, forming thin junctions between lens fiber cells that are essential for maintaining the ordered structure and transparency of the lens. This is Lens fiber major intrinsic protein from Bos taurus (Bovine).